A 214-amino-acid polypeptide reads, in one-letter code: Rho-related GTP-binding protein RhoJ (214 aa).

Residues Cys-3 and Cys-11 are each lipidated (S-palmitoyl cysteine). GTP is bound by residues 31–36, 46–53, 75–79, 133–136, and 177–178; these read AVGKTC, FPEEYVPT, DTAGQ, TQID, and AL. Positions 50-58 match the Effector region motif; that stretch reads YVPTVFDHY. Residue Cys-211 is modified to Cysteine methyl ester. Cys-211 carries S-farnesyl cysteine lipidation. A propeptide spans 212–214 (removed in mature form); that stretch reads AII.

Belongs to the small GTPase superfamily. Rho family. As to quaternary structure, interacts with the CRIB domains of proteins such as Pak1 and Was/Wasp. Interacts with GLUL. In terms of processing, palmitoylated; regulates localization to the plasma membrane and may be mediated by GLUL. In terms of tissue distribution, highly expressed in heart with moderate levels in lung and liver. Very low levels detected in brain, spleen, skeletal muscle, kidney and testis.

It is found in the cell membrane. Functionally, plasma membrane-associated small GTPase specifically involved in angiogenesis. Required for endothelial cell migration during vascular development via its interaction with GLUL. Elicits the formation of F-actin-rich structures, thereby regulating endothelial cell migration. The protein is Rho-related GTP-binding protein RhoJ (Rhoj) of Mus musculus (Mouse).